We begin with the raw amino-acid sequence, 919 residues long: Lipoxygenase 3, chloroplastic (919 aa).

A chloroplast-targeting transit peptide spans 1–52 (MALAKELMGYPLITERSSLVSSASHFKKRTQSTQFSINPFDRRPRKTKSGVV). One can recognise a PLAT domain in the interval 86-222 (VRAVVTVRNK…DHPDKRIFFT (137 aa)). Residues 225 to 919 (PYLPNETPSG…CRGVPNSVSI (695 aa)) form the Lipoxygenase domain. The disordered stretch occupies residues 272-310 (PDKSSELSRPKLGGKEVPYPRRCRTGRQSTVSDKDAESR). The Fe cation site is built by His-578, His-583, His-770, Asn-774, and Ile-919.

The protein belongs to the lipoxygenase family. It depends on Fe cation as a cofactor. As to expression, expressed in roots and leaves.

The protein resides in the plastid. It localises to the chloroplast. The enzyme catalyses (9Z,12Z)-octadecadienoate + O2 = (13S)-hydroperoxy-(9Z,11E)-octadecadienoate. The catalysed reaction is (9Z,12Z,15Z)-octadecatrienoate + O2 = (13S)-hydroperoxy-(9Z,11E,15Z)-octadecatrienoate. The protein operates within lipid metabolism; oxylipin biosynthesis. 13S-lipoxygenase that can use linolenic acid as substrates. Plant lipoxygenases may be involved in a number of diverse aspects of plant physiology including growth and development, pest resistance, and senescence or responses to wounding. Catalyzes the hydroperoxidation of lipids containing a cis,cis-1,4-pentadiene structure. This chain is Lipoxygenase 3, chloroplastic (LOX3), found in Arabidopsis thaliana (Mouse-ear cress).